The following is an 867-amino-acid chain: Leucine--tRNA ligase (867 aa).

A 'HIGH' region motif is present at residues 42–52 (PYPSGKLHMGH). A 'KMSKS' region motif is present at residues 631 to 635 (KMSKS). Lysine 634 contacts ATP.

This sequence belongs to the class-I aminoacyl-tRNA synthetase family.

It localises to the cytoplasm. The enzyme catalyses tRNA(Leu) + L-leucine + ATP = L-leucyl-tRNA(Leu) + AMP + diphosphate. The polypeptide is Leucine--tRNA ligase (Dichelobacter nodosus (strain VCS1703A)).